Here is a 285-residue protein sequence, read N- to C-terminus: NADPH-dependent 7-cyano-7-deazaguanine reductase (285 aa).

91–93 (IES) provides a ligand contact to substrate. Residue 93–94 (SK) participates in NADPH binding. Cys193 functions as the Thioimide intermediate in the catalytic mechanism. Asp200 acts as the Proton donor in catalysis. Residue 232–233 (HE) coordinates substrate. 261-262 (RG) serves as a coordination point for NADPH.

It belongs to the GTP cyclohydrolase I family. QueF type 2 subfamily. As to quaternary structure, homodimer.

Its subcellular location is the cytoplasm. The enzyme catalyses 7-aminomethyl-7-carbaguanine + 2 NADP(+) = 7-cyano-7-deazaguanine + 2 NADPH + 3 H(+). It participates in tRNA modification; tRNA-queuosine biosynthesis. Catalyzes the NADPH-dependent reduction of 7-cyano-7-deazaguanine (preQ0) to 7-aminomethyl-7-deazaguanine (preQ1). The sequence is that of NADPH-dependent 7-cyano-7-deazaguanine reductase from Shewanella baltica (strain OS223).